Here is a 68-residue protein sequence, read N- to C-terminus: Metallothionein-3 (68 aa).

An N-acetylmethionine modification is found at Met-1. The beta stretch occupies residues 1-30 (MDPETCPCPTGGSCTCSDPCKCEGCTCASS). 8 residues coordinate a divalent metal cation: Cys-6, Cys-8, Cys-14, Cys-16, Cys-20, Cys-22, Cys-25, and Cys-27. An alpha region spans residues 31-68 (KKSCCSCCPAECEKCAKDCVCKGGEGAEAEEKKCSCCQ). Ser-33 carries the phosphoserine modification. Cys-34, Cys-35, Cys-37, Cys-38, Cys-42, Cys-45, Cys-49, Cys-51, Cys-64, Cys-66, and Cys-67 together coordinate a divalent metal cation.

It belongs to the metallothionein superfamily. Type 1 family.

Binds heavy metals. Contains five zinc and one copper atoms per polypeptide chain and only a negligible amount of cadmium. The chain is Metallothionein-3 (MT3) from Bos mutus grunniens (Wild yak).